Here is a 296-residue protein sequence, read N- to C-terminus: NAD kinase (296 aa).

The Proton acceptor role is filled by D72. NAD(+) is bound by residues 72–73, 146–147, R157, K174, D176, 187–192, and Q247; these read DG, ND, and TAYALS.

Belongs to the NAD kinase family. A divalent metal cation is required as a cofactor.

The protein localises to the cytoplasm. It catalyses the reaction NAD(+) + ATP = ADP + NADP(+) + H(+). In terms of biological role, involved in the regulation of the intracellular balance of NAD and NADP, and is a key enzyme in the biosynthesis of NADP. Catalyzes specifically the phosphorylation on 2'-hydroxyl of the adenosine moiety of NAD to yield NADP. The chain is NAD kinase from Pseudomonas fluorescens (strain Pf0-1).